A 265-amino-acid polypeptide reads, in one-letter code: MDRKVQVLDFIKINPAGNITILIDNFDIYDKNIPKLSEEIMKETNLYAEQVGFIKDSHLQMMGGEFCGNASRAFASLLAFRDKDFSKQKNYNITCSGESKVLDVDVRNDGAKNKFLAKIKMPKFLSLEEINVDEYKLGLVRFSGINHFIFNIKENKETSFENIIDLVKKYLSNEEYSAFGIMFFDSDNLSMKPYVYVKEVGSGVYENSCASGTTALGYYLKKCKNLDRAKIVQPNGWLEYIIENDEMYIDGPVEIIAEGKIYIGK.

Cys67 acts as the Proton acceptor in catalysis. Cys209 (proton donor) is an active-site residue.

The protein belongs to the histidine racemase family. In terms of assembly, homodimer.

It catalyses the reaction L-histidine = D-histidine. Its activity is regulated as follows. Activity is not affected by buffer composition (PO(4) or Tris), ions (SO(4)(2-), Mg(2+) and EDTA) or the PLP inhibitor hydroxylamine. However, the activity is hindered by iodoacetamide and Hg(2+), which are known inhibitors of enzymes with catalytic thiols. Functionally, cofactor-independent isomerase that catalyzes the reversible conversion of L-histidine to D-histidine. Shows weak activity with L,L-lanthionine. The catalytic turnover is 10'000-fold faster with L-histidine than with L,L-lanthionine. May play a role in growth of F.nucleatum. This chain is Histidine racemase, found in Fusobacterium nucleatum subsp. nucleatum (strain ATCC 25586 / DSM 15643 / BCRC 10681 / CIP 101130 / JCM 8532 / KCTC 2640 / LMG 13131 / VPI 4355).